Consider the following 435-residue polypeptide: Nucleoredoxin (435 aa).

The residue at position 2 (S2) is an N-acetylserine. Positions P167 to A321 constitute a Thioredoxin domain.

It belongs to the nucleoredoxin family. As to quaternary structure, associates with the phosphatase 2A holoenzyme. Interacts with PPP2CA; the interaction is direct. Interacts with DVL1 (via PDZ domain); the interaction is direct and regulated by oxidative stress.

The protein resides in the cytoplasm. The protein localises to the cytosol. It localises to the nucleus. It catalyses the reaction [protein]-dithiol + NAD(+) = [protein]-disulfide + NADH + H(+). The enzyme catalyses [protein]-dithiol + NADP(+) = [protein]-disulfide + NADPH + H(+). Its function is as follows. Functions as a redox-dependent negative regulator of the Wnt signaling pathway, possibly by preventing ubiquitination of DVL3 by the BCR(KLHL12) complex. May also function as a transcriptional regulator act as a regulator of protein phosphatase 2A (PP2A). In Homo sapiens (Human), this protein is Nucleoredoxin (NXN).